The following is a 1738-amino-acid chain: Interaptin (1738 aa).

Residues 1 to 248 (MEHSTPLNEE…TYISLFPKVY (248 aa)) are actin-binding. Over 1-1705 (MEHSTPLNEE…RIFPSKNTRP (1705 aa)) the chain is Cytoplasmic. Calponin-homology (CH) domains lie at 22 to 128 (IAQK…LRYQ) and 146 to 249 (TKPS…KVYQ). Disordered regions lie at residues 285–350 (SKST…SNLS), 1068–1090 (IQQL…SEKD), and 1589–1627 (LQQQ…PNQI). Over residues 292-301 (QQNQQQQQQN) the composition is skewed to low complexity. Polar residues predominate over residues 302–316 (LLSPNSYRNSISFSK). Low complexity-rich tracts occupy residues 317 to 344 (SPSF…NSTT), 1068 to 1086 (IQQL…SNQL), and 1589 to 1617 (LQQQ…SSTP). The stretch at 373–1598 (EESRVIEKIV…LQQQKQQQQQ (1226 aa)) forms a coiled coil. A helical; Anchor for type IV membrane protein membrane pass occupies residues 1706–1726 (IFDWRALFFIGAAVLAISTLF).

Belongs to the alpha-actinin family.

It localises to the nucleus membrane. Its subcellular location is the endoplasmic reticulum membrane. The protein resides in the golgi apparatus. It is found in the golgi stack membrane. The protein localises to the cytoplasm. It localises to the cytoskeleton. Its subcellular location is the microtubule organizing center. The protein resides in the centrosome. Its function is as follows. May function as linker between cellular membranes and the actin cytoskeleton. Required for normal development of fruiting bodies. The protein is Interaptin (abpD) of Dictyostelium discoideum (Social amoeba).